Reading from the N-terminus, the 583-residue chain is ATP-dependent lipid A-core flippase (583 aa).

A run of 5 helical transmembrane segments spans residues 27 to 47 (LAVAVVALIINAVSDTYMVSL), 69 to 89 (LLVFGLMFIRGISSFVSTYCL), 142 to 162 (ALVSIVREGTSIIGLLVLMFY), 165 to 185 (WQLSLVLILVAPVVAWAIGFV), and 249 to 269 (AAANPIIQMIASIAIVVVLYL). Positions 28–310 (AVAVVALIIN…LTNVTSQFQR (283 aa)) constitute an ABC transmembrane type-1 domain. Residues 342-578 (VNVKDISFTY…DGAYAQLHRI (237 aa)) form the ABC transporter domain. ATP is bound at residue 376 to 383 (GRSGSGKS).

The protein belongs to the ABC transporter superfamily. Lipid exporter (TC 3.A.1.106) family. As to quaternary structure, homodimer.

It localises to the cell inner membrane. The enzyme catalyses ATP + H2O + lipid A-core oligosaccharideSide 1 = ADP + phosphate + lipid A-core oligosaccharideSide 2.. Its function is as follows. Involved in lipopolysaccharide (LPS) biosynthesis. Translocates lipid A-core from the inner to the outer leaflet of the inner membrane. Transmembrane domains (TMD) form a pore in the inner membrane and the ATP-binding domain (NBD) is responsible for energy generation. The polypeptide is ATP-dependent lipid A-core flippase (Vibrio vulnificus (strain YJ016)).